The sequence spans 266 residues: Na(+)-translocating NADH-quinone reductase subunit C (266 aa).

A helical transmembrane segment spans residues 16–36; sequence LLVVVILCLVCSVVVAGAAVG. The residue at position 232 (T232) is an FMN phosphoryl threonine.

It belongs to the NqrC family. In terms of assembly, composed of six subunits; NqrA, NqrB, NqrC, NqrD, NqrE and NqrF. Requires FMN as cofactor.

The protein localises to the cell inner membrane. The catalysed reaction is a ubiquinone + n Na(+)(in) + NADH + H(+) = a ubiquinol + n Na(+)(out) + NAD(+). In terms of biological role, NQR complex catalyzes the reduction of ubiquinone-1 to ubiquinol by two successive reactions, coupled with the transport of Na(+) ions from the cytoplasm to the periplasm. NqrA to NqrE are probably involved in the second step, the conversion of ubisemiquinone to ubiquinol. The sequence is that of Na(+)-translocating NADH-quinone reductase subunit C from Yersinia pestis.